Reading from the N-terminus, the 843-residue chain is Glycogen phosphorylase, brain form (843 aa).

An N-acetylalanine modification is found at Ala-2. Residue Ser-15 is modified to Phosphoserine; by PHK; in form phosphorylase A. Asp-43, Tyr-197, and Arg-310 together coordinate AMP. The residue at position 197 (Tyr-197) is a Phosphotyrosine. Residue Tyr-473 is modified to Phosphotyrosine. Lys-569 is a pyridoxal 5'-phosphate binding site. The pyridoxal 5'-phosphate stretch occupies residues 677 to 678 (TG). Lys-681 carries the N6-(pyridoxal phosphate)lysine modification.

It belongs to the glycogen phosphorylase family. Homodimer. Dimers associate into a tetramer to form the enzymatically active phosphorylase A. Requires pyridoxal 5'-phosphate as cofactor. Phosphorylation of Ser-15 converts phosphorylase B (unphosphorylated) to phosphorylase A.

The enzyme catalyses [(1-&gt;4)-alpha-D-glucosyl](n) + phosphate = [(1-&gt;4)-alpha-D-glucosyl](n-1) + alpha-D-glucose 1-phosphate. Its activity is regulated as follows. Activity of phosphorylase is controlled both by allosteric means (through the non-covalent binding of metabolites) and by covalent modification. Thus AMP allosterically activates, whereas ATP, ADP, and glucose-6-phosphate allosterically inhibit, phosphorylase B. In terms of biological role, glycogen phosphorylase that regulates glycogen mobilization. Phosphorylase is an important allosteric enzyme in carbohydrate metabolism. Enzymes from different sources differ in their regulatory mechanisms and in their natural substrates. However, all known phosphorylases share catalytic and structural properties. This Pongo abelii (Sumatran orangutan) protein is Glycogen phosphorylase, brain form (PYGB).